A 538-amino-acid chain; its full sequence is Sensor protein CitS (538 aa).

Topologically, residues 1–13 are cytoplasmic; that stretch reads MKRRLFPLTFSAK. Residues 14-34 form a helical membrane-spanning segment; it reads MMGFIALLIIAMFVLLGVFLN. At 35–174 the chain is on the extracellular side; that stretch reads EQYARTLEEQ…DIQQVIGERL (140 aa). The helical transmembrane segment at 175 to 195 threads the bilayer; that stretch reads IAMWQIVVVIMILGLMGTWLV. Over 196–538 the chain is Cytoplasmic; it reads ANTVKKATLG…TIPKHEAKEG (343 aa). The PAS domain occupies 216-282; it reads QQKEAILQSI…PEVLQVGKGQ (67 aa). The Histidine kinase domain maps to 339-534; the sequence is AQTHEFSNKL…CFVLTIPKHE (196 aa). Position 342 is a phosphohistidine; by autocatalysis (H342).

Its subcellular location is the cell membrane. The catalysed reaction is ATP + protein L-histidine = ADP + protein N-phospho-L-histidine.. In terms of biological role, member of the two-component regulatory system CitT/CitS. Functions probably as a membrane-associated protein kinase that phosphorylates CitT in response to environmental citrate or Mg(2+)-citrate complex. This is Sensor protein CitS (citS) from Halalkalibacterium halodurans (strain ATCC BAA-125 / DSM 18197 / FERM 7344 / JCM 9153 / C-125) (Bacillus halodurans).